The chain runs to 163 residues: Putative defense protein 3 (163 aa).

A signal peptide spans 1–18 (MMFAYIVAVVSALALTSA). A Reelin domain is found at 19–163 (YPTGAPSSTC…SAPVTVLSHK (145 aa)). A disulfide bridge connects residues Cys-28 and Cys-103.

This sequence belongs to the insect defense protein family.

It localises to the secreted. Its function is as follows. May have antimicrobial activity. This chain is Putative defense protein 3, found in Antheraea mylitta (Tasar silkworm).